We begin with the raw amino-acid sequence, 119 residues long: Small ribosomal subunit protein bS6 (119 aa).

The protein belongs to the bacterial ribosomal protein bS6 family.

Its function is as follows. Binds together with bS18 to 16S ribosomal RNA. This is Small ribosomal subunit protein bS6 from Buchnera aphidicola subsp. Baizongia pistaciae (strain Bp).